Consider the following 395-residue polypeptide: S-adenosylmethionine synthase (395 aa).

Residue H16 coordinates ATP. D18 contacts Mg(2+). E44 is a binding site for K(+). L-methionine is bound by residues E57 and Q100. The flexible loop stretch occupies residues 100-110 (QSPDIAQGVDD). Residues 174–176 (DAK), 241–242 (RF), D250, 256–257 (RK), A273, and K277 each bind ATP. Position 250 (D250) interacts with L-methionine. Residue K281 participates in L-methionine binding.

This sequence belongs to the AdoMet synthase family. As to quaternary structure, homotetramer; dimer of dimers. Mg(2+) serves as cofactor. Requires K(+) as cofactor.

It is found in the cytoplasm. It carries out the reaction L-methionine + ATP + H2O = S-adenosyl-L-methionine + phosphate + diphosphate. It participates in amino-acid biosynthesis; S-adenosyl-L-methionine biosynthesis; S-adenosyl-L-methionine from L-methionine: step 1/1. In terms of biological role, catalyzes the formation of S-adenosylmethionine (AdoMet) from methionine and ATP. The overall synthetic reaction is composed of two sequential steps, AdoMet formation and the subsequent tripolyphosphate hydrolysis which occurs prior to release of AdoMet from the enzyme. The chain is S-adenosylmethionine synthase from Limosilactobacillus reuteri (strain DSM 20016) (Lactobacillus reuteri).